We begin with the raw amino-acid sequence, 91 residues long: Small ribosomal subunit protein uS15 (91 aa).

It belongs to the universal ribosomal protein uS15 family. Part of the 30S ribosomal subunit. Forms a bridge to the 50S subunit in the 70S ribosome, contacting the 23S rRNA.

One of the primary rRNA binding proteins, it binds directly to 16S rRNA where it helps nucleate assembly of the platform of the 30S subunit by binding and bridging several RNA helices of the 16S rRNA. Functionally, forms an intersubunit bridge (bridge B4) with the 23S rRNA of the 50S subunit in the ribosome. The sequence is that of Small ribosomal subunit protein uS15 from Rickettsia canadensis (strain McKiel).